Consider the following 217-residue polypeptide: ATP-dependent Clp protease proteolytic subunit (217 aa).

S120 functions as the Nucleophile in the catalytic mechanism. H145 is a catalytic residue.

Belongs to the peptidase S14 family. Fourteen ClpP subunits assemble into 2 heptameric rings which stack back to back to give a disk-like structure with a central cavity, resembling the structure of eukaryotic proteasomes.

It is found in the cytoplasm. The catalysed reaction is Hydrolysis of proteins to small peptides in the presence of ATP and magnesium. alpha-casein is the usual test substrate. In the absence of ATP, only oligopeptides shorter than five residues are hydrolyzed (such as succinyl-Leu-Tyr-|-NHMec, and Leu-Tyr-Leu-|-Tyr-Trp, in which cleavage of the -Tyr-|-Leu- and -Tyr-|-Trp bonds also occurs).. Its function is as follows. Cleaves peptides in various proteins in a process that requires ATP hydrolysis. Has a chymotrypsin-like activity. Plays a major role in the degradation of misfolded proteins. In Ralstonia nicotianae (strain ATCC BAA-1114 / GMI1000) (Ralstonia solanacearum), this protein is ATP-dependent Clp protease proteolytic subunit.